We begin with the raw amino-acid sequence, 287 residues long: Small ribosomal subunit protein uS10m (287 aa).

The transit peptide at 1 to 33 directs the protein to the mitochondrion; that stretch reads MSLFSPHRILLRTGSAFQLATATRALLSTSSQL. Over residues 33–43 the composition is skewed to polar residues; sequence LRNTKNAQSGL. Residues 33–84 are disordered; sequence LRNTKNAQSGLAEQARAEEPVASSPSQTTRPEQKSLEEETTKQTQTHADSTV. The span at 63–73 shows a compositional bias: basic and acidic residues; sequence PEQKSLEEETT. Polar residues predominate over residues 74–84; sequence KQTQTHADSTV.

It belongs to the universal ribosomal protein uS10 family. As to quaternary structure, part of the mitochondrial small ribosomal subunit.

Its subcellular location is the mitochondrion. Functionally, involved in mitochondrial genome encoded proteins translation. Involved in the binding of tRNA to the ribosomes. The sequence is that of Small ribosomal subunit protein uS10m (rsm10) from Emericella nidulans (strain FGSC A4 / ATCC 38163 / CBS 112.46 / NRRL 194 / M139) (Aspergillus nidulans).